The chain runs to 185 residues: Ribosome-recycling factor (185 aa).

It belongs to the RRF family.

The protein resides in the cytoplasm. Responsible for the release of ribosomes from messenger RNA at the termination of protein biosynthesis. May increase the efficiency of translation by recycling ribosomes from one round of translation to another. The chain is Ribosome-recycling factor from Vibrio cholerae serotype O1 (strain ATCC 39541 / Classical Ogawa 395 / O395).